The following is a 346-amino-acid chain: MERKSNLSLLLLLLVLGMPLVRGSSPLPLVVNTWPFKNATEAAWWTLLSGGSALDAVENGCAVCEKEQCDGTVGFGGSPDEGGETTLDAMIMDGTAMDVGAVGGLRRIKNAIGVARRVLEHTTHTLLVGDSATKFAESMGFTNEDLSTKTSRDLHSDWLSRNCQPNYWRNVIPDPSKYCGPYKPSGFLKQSISPHKEEVDIHSHDTIGMVVIHKTGHTAAGTSTNGIKFKIPGRVGDSPIPGAGAYADDTAGAAAATGDGDTLLRFLPSYQAVEYMRGGDDPAIACQKVILRIQKYYPNFFGAVICASVNGSYGAACNKLPTFTQFSFMVSNSLHNEPTEKKVDCI.

The first 23 residues, 1-23, serve as a signal peptide directing secretion; sequence MERKSNLSLLLLLLVLGMPLVRG. Asparagine 38 carries N-linked (GlcNAc...) asparagine glycosylation. Intrachain disulfides connect cysteine 64–cysteine 69 and cysteine 163–cysteine 179. Residue threonine 206 is the Nucleophile of the active site. Residues 234-237 and 257-260 contribute to the substrate site; these read RVGD and TGDG. Residues cysteine 286 and cysteine 306 are joined by a disulfide bond. An N-linked (GlcNAc...) asparagine glycan is attached at asparagine 310. A disulfide bridge links cysteine 317 with cysteine 345.

The protein belongs to the Ntn-hydrolase family. As to quaternary structure, heterotetramer of two alpha and two beta chains arranged as a dimer of alpha/beta heterodimers. Cleaved into an alpha and beta chain by autocatalysis; this activates the enzyme. The N-terminal residue of the beta subunit is responsible for the nucleophile hydrolase activity. Post-translationally, N-glycosylated.

Its subcellular location is the lysosome. It carries out the reaction N(4)-(beta-N-acetyl-D-glucosaminyl)-L-asparagine + H2O = N-acetyl-beta-D-glucosaminylamine + L-aspartate + H(+). Cleaves the GlcNAc-Asn bond which joins oligosaccharides to the peptide of asparagine-linked glycoproteins. The polypeptide is N(4)-(beta-N-acetylglucosaminyl)-L-asparaginase (Aga) (Mus musculus (Mouse)).